The sequence spans 405 residues: Elongation factor Tu (405 aa).

The 206-residue stretch at 10 to 215 folds into the tr-type G domain; that stretch reads KPHVNIGTIG…AVDSYIPTPE (206 aa). The G1 stretch occupies residues 19-26; the sequence is GHVDHGKT. 19–26 is a binding site for GTP; sequence GHVDHGKT. Mg(2+) is bound at residue Thr26. A G2 region spans residues 61–65; sequence GITIN. The tract at residues 82–85 is G3; sequence DCPG. Residues 82 to 86 and 137 to 140 each bind GTP; these read DCPGH and NKVD. The tract at residues 137–140 is G4; sequence NKVD. The tract at residues 175 to 177 is G5; that stretch reads SAL.

The protein belongs to the TRAFAC class translation factor GTPase superfamily. Classic translation factor GTPase family. EF-Tu/EF-1A subfamily. Monomer.

It localises to the cytoplasm. It carries out the reaction GTP + H2O = GDP + phosphate + H(+). Its function is as follows. GTP hydrolase that promotes the GTP-dependent binding of aminoacyl-tRNA to the A-site of ribosomes during protein biosynthesis. The polypeptide is Elongation factor Tu (Deinococcus radiodurans (strain ATCC 13939 / DSM 20539 / JCM 16871 / CCUG 27074 / LMG 4051 / NBRC 15346 / NCIMB 9279 / VKM B-1422 / R1)).